The chain runs to 26 residues: ATP synthase subunit gamma, mitochondrial (26 aa).

The protein belongs to the ATPase gamma chain family. F-type ATPases have 2 components, CF(1) - the catalytic core - and CF(0) - the membrane proton channel. CF(1) has five subunits: alpha(3), beta(3), gamma(1), delta(1), epsilon(1). CF(0) has three main subunits: a, b and c.

The protein resides in the mitochondrion. The protein localises to the mitochondrion inner membrane. Functionally, mitochondrial membrane ATP synthase (F(1)F(0) ATP synthase or Complex V) produces ATP from ADP in the presence of a proton gradient across the membrane which is generated by electron transport complexes of the respiratory chain. F-type ATPases consist of two structural domains, F(1) - containing the extramembraneous catalytic core, and F(0) - containing the membrane proton channel, linked together by a central stalk and a peripheral stalk. During catalysis, ATP synthesis in the catalytic domain of F(1) is coupled via a rotary mechanism of the central stalk subunits to proton translocation. Part of the complex F(1) domain and the central stalk which is part of the complex rotary element. The gamma subunit protrudes into the catalytic domain formed of alpha(3)beta(3). Rotation of the central stalk against the surrounding alpha(3)beta(3) subunits leads to hydrolysis of ATP in three separate catalytic sites on the beta subunits. The sequence is that of ATP synthase subunit gamma, mitochondrial (ATPC) from Spinacia oleracea (Spinach).